We begin with the raw amino-acid sequence, 70 residues long: ATP synthase subunit c (70 aa).

2 consecutive transmembrane segments (helical) span residues 3–23 (ALAA…IGIA) and 44–64 (LFLI…VIAF).

Belongs to the ATPase C chain family. In terms of assembly, F-type ATPases have 2 components, F(1) - the catalytic core - and F(0) - the membrane proton channel. F(1) has five subunits: alpha(3), beta(3), gamma(1), delta(1), epsilon(1). F(0) has three main subunits: a(1), b(2) and c(10-14). The alpha and beta chains form an alternating ring which encloses part of the gamma chain. F(1) is attached to F(0) by a central stalk formed by the gamma and epsilon chains, while a peripheral stalk is formed by the delta and b chains.

Its subcellular location is the cell membrane. Functionally, f(1)F(0) ATP synthase produces ATP from ADP in the presence of a proton or sodium gradient. F-type ATPases consist of two structural domains, F(1) containing the extramembraneous catalytic core and F(0) containing the membrane proton channel, linked together by a central stalk and a peripheral stalk. During catalysis, ATP synthesis in the catalytic domain of F(1) is coupled via a rotary mechanism of the central stalk subunits to proton translocation. Key component of the F(0) channel; it plays a direct role in translocation across the membrane. A homomeric c-ring of between 10-14 subunits forms the central stalk rotor element with the F(1) delta and epsilon subunits. This is ATP synthase subunit c from Caldicellulosiruptor bescii (strain ATCC BAA-1888 / DSM 6725 / KCTC 15123 / Z-1320) (Anaerocellum thermophilum).